The chain runs to 317 residues: Enoyl-CoA delta isomerase 3, peroxisomal (317 aa).

One can recognise an ACB domain in the interval 1–46 (MPKPGVFNFVNKATWDARNALGSLPKETARKNYVDLVSSLSSSSEA). Residues 40–60 (LSSSSEAPSQGKRGADEKARE) form a disordered region. Residue 120–124 (SGNDL) participates in substrate binding. The Microbody targeting signal signature appears at 315–317 (AKL).

It belongs to the enoyl-CoA hydratase/isomerase family. Expressed at high levels in the kidney. Also detected at very low levels in the duodenum, jejunum, ileum, heart, liver, lung, and brown adipose tissue (at protein level). In the kidney, expression seems to be localized mainly to the proximal tubule.

It is found in the peroxisome. It catalyses the reaction a (3Z)-enoyl-CoA = a 4-saturated (2E)-enoyl-CoA. The enzyme catalyses a (3E)-enoyl-CoA = a 4-saturated (2E)-enoyl-CoA. The catalysed reaction is (3E)-nonenoyl-CoA = (2E)-nonenoyl-CoA. In terms of biological role, catalyzes the isomerization of trans-3-nonenoyl-CoA into trans-2-nonenoyl-CoA. May also have activity towards other enoyl-CoA species. This Mus musculus (Mouse) protein is Enoyl-CoA delta isomerase 3, peroxisomal.